A 193-amino-acid chain; its full sequence is Peptidyl-tRNA hydrolase (193 aa).

Tyr-17 provides a ligand contact to tRNA. His-22 serves as the catalytic Proton acceptor. TRNA-binding residues include Phe-68, Asn-70, and Asn-116.

The protein belongs to the PTH family. In terms of assembly, monomer.

The protein localises to the cytoplasm. The catalysed reaction is an N-acyl-L-alpha-aminoacyl-tRNA + H2O = an N-acyl-L-amino acid + a tRNA + H(+). Functionally, hydrolyzes ribosome-free peptidyl-tRNAs (with 1 or more amino acids incorporated), which drop off the ribosome during protein synthesis, or as a result of ribosome stalling. Catalyzes the release of premature peptidyl moieties from peptidyl-tRNA molecules trapped in stalled 50S ribosomal subunits, and thus maintains levels of free tRNAs and 50S ribosomes. This chain is Peptidyl-tRNA hydrolase, found in Acinetobacter baylyi (strain ATCC 33305 / BD413 / ADP1).